The following is a 193-amino-acid chain: Interleukin-18-binding protein (193 aa).

Positions 1–28 are cleaved as a signal peptide; it reads MTMRHCWTAGPSSWWVLLLYVHVILARA. The Ig-like C2-type domain occupies 60 to 161; that stretch reads PALDVIWPEK…QVAQYHIILA (102 aa). Residues N74, N98, N120, and N142 are each glycosylated (N-linked (GlcNAc...) asparagine). Residues C81 and C145 are joined by a disulfide bond. Positions 172-185 are enriched in polar residues; sequence SPSQETLSSHSPVS. The disordered stretch occupies residues 172–193; that stretch reads SPSQETLSSHSPVSRSAGPGVA.

The protein resides in the secreted. In terms of biological role, binds to IL-18 and inhibits its activity. Functions as an inhibitor of the early TH1 cytokine response. This Mus musculus (Mouse) protein is Interleukin-18-binding protein (Il18bp).